The primary structure comprises 1158 residues: Serine/threonine/tyrosine-interacting-like protein 2 (1158 aa).

Disordered stretches follow at residues 1–21, 280–303, 315–337, 360–392, 407–444, 492–527, 559–582, 597–622, 873–915, and 940–1135; these read MATR…DEAN, EERE…GTGS, EEED…QASK, LLSD…VERI, GYRR…ESVS, SRRY…GSEA, KDLG…KNPS, QKKV…LAKK, KVKE…CSSL, and SGLR…MDDE. The segment covering 8–19 has biased composition (acidic residues); that stretch reads EEEQVVPSEEDE. The region spanning 132-280 is the Tyrosine-protein phosphatase domain; sequence NEVDEVWPNV…LRELNEKLME (149 aa). Positions 322 to 337 are enriched in polar residues; sequence SHLSGSSLGKATQASK. Serine 377 is subject to Phosphoserine. Residue threonine 433 is modified to Phosphothreonine. Over residues 435-444 the composition is skewed to low complexity; it reads SESSAWESVS. Residues 500–517 show a composition bias toward basic and acidic residues; sequence KREEAADRSSEAGSRVRE. Serine 509 is subject to Phosphoserine. Over residues 600 to 619 the composition is skewed to basic and acidic residues; that stretch reads VGSENKEEVVELSKGEDSAL. A compositionally biased stretch (acidic residues) spans 877–890; sequence DEDDGVGDGDEDTD. Polar residues-rich tracts occupy residues 897–914 and 952–966; these read RYSS…TCSS and SDWS…TRSS. A compositionally biased stretch (low complexity) spans 974–983; the sequence is KSSSYKFSKS. Phosphoserine is present on serine 985. The span at 990-999 shows a compositional bias: polar residues; sequence TSSYHEANGN. Residues 1000–1012 show a composition bias toward low complexity; it reads SVRSTSRFSSSST. Serine 1036 bears the Phosphoserine mark. Basic and acidic residues-rich tracts occupy residues 1044 to 1056, 1064 to 1079, and 1094 to 1111; these read RTPE…ESPE, RSRD…KSDF, and RSEE…EEGR. Over residues 1126–1135 the composition is skewed to acidic residues; it reads REEEEEMDDE.

Belongs to the protein-tyrosine phosphatase family. Non-receptor class dual specificity subfamily.

It localises to the cytoplasm. The protein resides in the myofibril. It is found in the sarcomere. May be required for myofiber maturation. This is Serine/threonine/tyrosine-interacting-like protein 2 from Homo sapiens (Human).